The chain runs to 282 residues: MFSWLPFSCALLLLQPLPARSLENAYTAEVGKNAYLPCSYTVPAPGTLVPICWGKGSCPLLQCASVVLRTDETNVTYRKSRRYQLKGNFYKGDMSLTIKNVTLADSGTYCCRIQFPGPMNDEKLELKLSITEPAKVIPAGTAHGDSTTASPRTLTTEGSGSETQTLVTLHDNNGTKISTWADEIKDSGETIRTAVHIGVGVSAGLALALILGVLILKWYSSKKKKLQDLSLITLANSPPGGLVNAGAGRIRSEENIYTIEENIYEMENSNEYYCYVSSQQPS.

A signal peptide spans 1 to 21 (MFSWLPFSCALLLLQPLPARS). The Ig-like V-type domain occupies 22 to 131 (LENAYTAEVG…EKLELKLSIT (110 aa)). Residues 22–194 (LENAYTAEVG…KDSGETIRTA (173 aa)) are Extracellular-facing. 3 disulfides stabilise this stretch: cysteine 38–cysteine 111, cysteine 52–cysteine 63, and cysteine 58–cysteine 110. A 1,2-diacyl-sn-glycero-3-phospho-L-serine is bound at residue glutamine 62. 2 N-linked (GlcNAc...) asparagine glycosylation sites follow: asparagine 74 and asparagine 100. Arginine 112 provides a ligand contact to a 1,2-diacyl-sn-glycero-3-phospho-L-serine. Ca(2+) is bound by residues phenylalanine 115 and glycine 117. Methionine 119 lines the a 1,2-diacyl-sn-glycero-3-phospho-L-serine pocket. A Ca(2+)-binding site is contributed by asparagine 120. Residues 138-163 (PAGTAHGDSTTASPRTLTTEGSGSET) are disordered. Residues 144–163 (GDSTTASPRTLTTEGSGSET) show a composition bias toward polar residues. Residue threonine 147 is glycosylated (O-linked (GalNAc...) threonine). N-linked (GlcNAc...) asparagine glycosylation occurs at asparagine 173. Residues 195 to 215 (VHIGVGVSAGLALALILGVLI) traverse the membrane as a helical segment. The Cytoplasmic segment spans residues 216–282 (LKWYSSKKKK…YCYVSSQQPS (67 aa)). Residues 253 to 271 (EENIYTIEENIYEMENSNE) form an interaction with BAG6 region. At tyrosine 257 the chain carries Phosphotyrosine; by ITK.

Belongs to the immunoglobulin superfamily. TIM family. As to quaternary structure, interacts with HMGB1; impairs HMGB1 binding to B-DNA and likely HMGB1-mediated innate immune response. Interacts with BAG6. Interacts (phosphorylated) with PIK3R1 and PIK3R2. Interacts (not dependent on its phosphorylation status) with FYN. Interacts (in basal state T-cells) with VAV1; AKT1/2, LCP2, ZAP70, SYK, PIK3R1, FYN, SH3BP2 and SH2D2A. Interacts (in activated T-cells) with LCK and PLCG. Interacts with ILF3; this interaction promotes ILF3 ubiquitination and degradation.

Its subcellular location is the membrane. The protein resides in the cell junction. Its function is as follows. Cell surface receptor implicated in modulating innate and adaptive immune responses. Generally accepted to have an inhibiting function. Reports on stimulating functions suggest that the activity may be influenced by the cellular context and/or the respective ligand. Regulates macrophage activation. Inhibits T-helper type 1 lymphocyte (Th1)-mediated auto- and alloimmune responses and promotes immunological tolerance. In CD8+ cells attenuates TCR-induced signaling, specifically by blocking NF-kappaB and NFAT promoter activities resulting in the loss of IL-2 secretion. The function may implicate its association with LCK proposed to impair phosphorylation of TCR subunits. In contrast, shown to activate TCR-induced signaling in T-cells probably implicating ZAP70, LCP2, LCK and FYN. Expressed on Treg cells can inhibit Th17 cell responses. Receptor for LGALS9. Binding to LGALS9 is believed to result in suppression of T-cell responses; the resulting apoptosis of antigen-specific cells may implicate HAVCR2 phosphorylation and disruption of its association with BAG6. Binding to LGALS9 is proposed to be involved in innate immune response to intracellular pathogens. Expressed on Th1 cells interacts with LGALS9 expressed on Mycobacterium tuberculosis-infected macrophages to stimulate antibactericidal activity including IL-1 beta secretion and to restrict intracellular bacterial growth. However, the function as receptor for LGALS9 has been challenged. Also reported to enhance CD8+ T cell responses to an acute infection such as by Listeria monocytogenes. Receptor for phosphatidylserine (PtSer); PtSer-binding is calcium-dependent. May recognize PtSer on apoptotic cells leading to their phagocytosis. Mediates the engulfment of apoptotic cells by dendritic cells. Expressed on T-cells, promotes conjugation but not engulfment of apoptotic cells. Expressed on dendritic cells (DCs) positively regulates innate immune response and in synergy with Toll-like receptors promotes secretion of TNF-alpha. In tumor-imfiltrating DCs suppresses nucleic acid-mediated innate immune repsonse by interaction with HMGB1 and interfering with nucleic acid-sensing and trafficking of nucleid acids to endosomes. Can enhance mast cell production of Th2 cytokines Il-4, IL-6 and IL-13. Expressed on natural killer (NK) cells acts as a coreceptor to enhance IFN-gamma production in response to LGALS9. In contrast, shown to suppress NK cell-mediated cytotoxicity. Negatively regulates NK cell function in LPS-induced endotoxic shock. The chain is Hepatitis A virus cellular receptor 2 homolog (Havcr2) from Rattus norvegicus (Rat).